The sequence spans 267 residues: MGQKINPIGFRVGVIRDWDAKWYADKKEYVPALQEDLRIRKYLETNLKDAAVDRITIERTEPTRINLTIHTAKPGIVIGRGGADVERLRSELSKIVDTYKGQHKRVNINIVEIRKPDLNAHLVGQQIAADLERRVAFRRAMRGAIQRVQRAGAKGVRTMVSGRLNGADIARKEQYTEGTVPLHTLRADIDYSWDEAMTSYGNLGIKTWIYRGDAENGQFIKDEDVAAAANNRGRGNNRGRGNSRQNGGRSRRPRQGQASTQGRGGNN.

A KH type-2 domain is found at 39-114 (IRKYLETNLK…RVNINIVEIR (76 aa)). Low complexity predominate over residues 229 to 248 (ANNRGRGNNRGRGNSRQNGG). A disordered region spans residues 229–267 (ANNRGRGNNRGRGNSRQNGGRSRRPRQGQASTQGRGGNN).

It belongs to the universal ribosomal protein uS3 family. As to quaternary structure, part of the 30S ribosomal subunit. Forms a tight complex with proteins S10 and S14.

Binds the lower part of the 30S subunit head. Binds mRNA in the 70S ribosome, positioning it for translation. The polypeptide is Small ribosomal subunit protein uS3 (Oenococcus oeni (strain ATCC BAA-331 / PSU-1)).